A 492-amino-acid polypeptide reads, in one-letter code: 2-succinylbenzoate--CoA ligase (492 aa).

This sequence belongs to the ATP-dependent AMP-binding enzyme family. MenE subfamily.

It catalyses the reaction 2-succinylbenzoate + ATP + CoA = 2-succinylbenzoyl-CoA + AMP + diphosphate. Its pathway is quinol/quinone metabolism; 1,4-dihydroxy-2-naphthoate biosynthesis; 1,4-dihydroxy-2-naphthoate from chorismate: step 5/7. It participates in quinol/quinone metabolism; menaquinone biosynthesis. Its function is as follows. Converts 2-succinylbenzoate (OSB) to 2-succinylbenzoyl-CoA (OSB-CoA). The chain is 2-succinylbenzoate--CoA ligase from Staphylococcus aureus (strain USA300 / TCH1516).